A 209-amino-acid polypeptide reads, in one-letter code: Uracil phosphoribosyltransferase (209 aa).

5-phospho-alpha-D-ribose 1-diphosphate contacts are provided by residues R79, R104, and D131–S139. Residues I194 and G199 to A201 contribute to the uracil site. D200 contributes to the 5-phospho-alpha-D-ribose 1-diphosphate binding site.

This sequence belongs to the UPRTase family. Mg(2+) serves as cofactor.

The enzyme catalyses UMP + diphosphate = 5-phospho-alpha-D-ribose 1-diphosphate + uracil. It participates in pyrimidine metabolism; UMP biosynthesis via salvage pathway; UMP from uracil: step 1/1. Its activity is regulated as follows. Allosterically activated by GTP. Catalyzes the conversion of uracil and 5-phospho-alpha-D-ribose 1-diphosphate (PRPP) to UMP and diphosphate. This chain is Uracil phosphoribosyltransferase, found in Clostridium botulinum (strain Alaska E43 / Type E3).